The following is a 337-amino-acid chain: 1-aminocyclopropane-1-carboxylate deaminase (337 aa).

Lysine 50 is subject to N6-(pyridoxal phosphate)lysine. Serine 77 (nucleophile) is an active-site residue.

Belongs to the ACC deaminase/D-cysteine desulfhydrase family. In terms of assembly, homotrimer. Pyridoxal 5'-phosphate is required as a cofactor.

It catalyses the reaction 1-aminocyclopropane-1-carboxylate + H2O = 2-oxobutanoate + NH4(+). In terms of biological role, catalyzes a cyclopropane ring-opening reaction, the irreversible conversion of 1-aminocyclopropane-1-carboxylate (ACC) to ammonia and alpha-ketobutyrate. Allows growth on ACC as a nitrogen source. The chain is 1-aminocyclopropane-1-carboxylate deaminase from Allorhizobium ampelinum (strain ATCC BAA-846 / DSM 112012 / S4) (Agrobacterium vitis (strain S4)).